The primary structure comprises 320 residues: ATP-dependent 6-phosphofructokinase (320 aa).

G12 is a binding site for ATP. Residues R22–R26 and R55–D60 each bind ADP. ATP contacts are provided by residues R73–F74 and G103–S106. D104 serves as a coordination point for Mg(2+). A substrate-binding site is contributed by T126 to D128. Residue D128 is the Proton acceptor of the active site. An ADP-binding site is contributed by R155. Substrate contacts are provided by residues R163 and M170–R172. ADP contacts are provided by residues G186 to E188 and K214 to H216. Substrate-binding positions include E223, R244, and H250–R253.

The protein belongs to the phosphofructokinase type A (PFKA) family. ATP-dependent PFK group I subfamily. Prokaryotic clade 'B1' sub-subfamily. In terms of assembly, homotetramer. Mg(2+) is required as a cofactor.

It is found in the cytoplasm. The enzyme catalyses beta-D-fructose 6-phosphate + ATP = beta-D-fructose 1,6-bisphosphate + ADP + H(+). It functions in the pathway carbohydrate degradation; glycolysis; D-glyceraldehyde 3-phosphate and glycerone phosphate from D-glucose: step 3/4. Allosterically activated by ADP and other diphosphonucleosides, and allosterically inhibited by phosphoenolpyruvate. In terms of biological role, catalyzes the phosphorylation of D-fructose 6-phosphate to fructose 1,6-bisphosphate by ATP, the first committing step of glycolysis. The polypeptide is ATP-dependent 6-phosphofructokinase (Baumannia cicadellinicola subsp. Homalodisca coagulata).